The primary structure comprises 352 residues: 4-hydroxy-3-methylbut-2-en-1-yl diphosphate synthase (flavodoxin) (352 aa).

The [4Fe-4S] cluster site is built by Cys263, Cys266, Cys298, and Glu305.

Belongs to the IspG family. It depends on [4Fe-4S] cluster as a cofactor.

It carries out the reaction (2E)-4-hydroxy-3-methylbut-2-enyl diphosphate + oxidized [flavodoxin] + H2O + 2 H(+) = 2-C-methyl-D-erythritol 2,4-cyclic diphosphate + reduced [flavodoxin]. Its pathway is isoprenoid biosynthesis; isopentenyl diphosphate biosynthesis via DXP pathway; isopentenyl diphosphate from 1-deoxy-D-xylulose 5-phosphate: step 5/6. In terms of biological role, converts 2C-methyl-D-erythritol 2,4-cyclodiphosphate (ME-2,4cPP) into 1-hydroxy-2-methyl-2-(E)-butenyl 4-diphosphate. In Sulfurimonas denitrificans (strain ATCC 33889 / DSM 1251) (Thiomicrospira denitrificans (strain ATCC 33889 / DSM 1251)), this protein is 4-hydroxy-3-methylbut-2-en-1-yl diphosphate synthase (flavodoxin).